The primary structure comprises 827 residues: Zinc finger protein 438 (827 aa).

3 disordered regions span residues 1–31 (MQNSLSVPPRDEGESNIPSGTIQSRKGLQNK), 117–173 (LKLP…LYKP), and 193–232 (ALTNGSDHGDLRPPVTNTHGSLNPPATPASPTPEEPAKQD). Polar residues-rich tracts occupy residues 16–31 (NIPSGTIQSRKGLQNK) and 150–159 (PAQTQMCPQM). A compositionally biased stretch (pro residues) spans 217–226 (PATPASPTPE). 3 consecutive C2H2-type zinc fingers follow at residues 506–528 (HRCHVCNHHFQFKQHLQDHMNTH), 534–556 (YSCRICRKSYVRPGSLSTHMKLH), and 566–589 (MCCEFCAKVFGHIRVYFGHLKEVH). Residues 682 to 723 (FPGSKGTQEELVQHASHDWKRHPERGKPEKVHSSSEESHACP) form a disordered region. Composition is skewed to basic and acidic residues over residues 688 to 699 (TQEELVQHASHD) and 706 to 721 (RGKPEKVHSSSEESHA). Residues 775-798 (FNCLLCAEMLGQKEDLLHHWKHQH) form a C2H2-type 4 zinc finger.

It localises to the nucleus. In terms of biological role, acts as a transcriptional repressor. The sequence is that of Zinc finger protein 438 (ZNF438) from Pongo abelii (Sumatran orangutan).